A 343-amino-acid polypeptide reads, in one-letter code: Ribosomal RNA small subunit methyltransferase H (343 aa).

Residues 39–41, Asp-58, Phe-87, Asp-108, and Gln-115 each bind S-adenosyl-L-methionine; that span reads AGH.

Belongs to the methyltransferase superfamily. RsmH family.

It is found in the cytoplasm. It catalyses the reaction cytidine(1402) in 16S rRNA + S-adenosyl-L-methionine = N(4)-methylcytidine(1402) in 16S rRNA + S-adenosyl-L-homocysteine + H(+). Functionally, specifically methylates the N4 position of cytidine in position 1402 (C1402) of 16S rRNA. In Bifidobacterium adolescentis (strain ATCC 15703 / DSM 20083 / NCTC 11814 / E194a), this protein is Ribosomal RNA small subunit methyltransferase H.